A 143-amino-acid polypeptide reads, in one-letter code: Hemoglobin subunit alpha-A (143 aa).

A Globin domain is found at 2-143 (SLSGKDKSVV…LALALAERYR (142 aa)). His60 contributes to the O2 binding site. His89 is a heme b binding site.

The protein belongs to the globin family. In terms of assembly, heterotetramer of two alpha chains and two beta chains. Red blood cells.

In terms of biological role, involved in oxygen transport from gills to the various peripheral tissues. In Seriola quinqueradiata (Five-ray yellowtail), this protein is Hemoglobin subunit alpha-A (hbaa).